Here is a 520-residue protein sequence, read N- to C-terminus: ATP-dependent RNA helicase CshA (520 aa).

A Q motif motif is present at residues 2-30 (TKFSEFGLDEKIVKSVNRMGFEEATPIQE). The Helicase ATP-binding domain occupies 33–203 (IPLGLEGKDL…ERFMHSPELI (171 aa)). ATP is bound at residue 46-53 (AQTGTGKT). The short motif at 151–154 (DEAD) is the DEAD box element. The Helicase C-terminal domain occupies 214 to 374 (LIEQFFVKVH…PLQAPTWDEA (161 aa)). Basic and acidic residues predominate over residues 428–439 (KTPVHITEERPL). Residues 428–520 (KTPVHITEER…NKGNYSQKSK (93 aa)) are disordered. 2 stretches are compositionally biased toward gly residues: residues 442-468 (RGGG…GKGG) and 482-496 (SGGG…GGGG).

Belongs to the DEAD box helicase family. CshA subfamily. In terms of assembly, oligomerizes, may be a member of the RNA degradosome.

The protein resides in the cytoplasm. The catalysed reaction is ATP + H2O = ADP + phosphate + H(+). DEAD-box RNA helicase possibly involved in RNA degradation. Unwinds dsRNA in both 5'- and 3'-directions, has RNA-dependent ATPase activity. Involved in cold tolerance, motility and alcohol tolerance. The polypeptide is ATP-dependent RNA helicase CshA (Listeria monocytogenes serovar 1/2a (strain ATCC BAA-679 / EGD-e)).